Here is a 229-residue protein sequence, read N- to C-terminus: Heptahelical transmembrane protein ADIPOR2 (229 aa).

The Cytoplasmic portion of the chain corresponds to 1 to 4 (MQGA). Residues 5–25 (ASHDAAAAAAAAAVLGGGHGV) traverse the membrane as a helical segment. The Extracellular segment spans residues 26-30 (PRWPR). The helical transmembrane segment at 31 to 51 (MVFLVGAMTCLAISATAHLLA) threads the bilayer. The Cytoplasmic portion of the chain corresponds to 52–66 (CHSRRASVVFWQLDY). A helical membrane pass occupies residues 67–87 (AGISAMIVASFVPPVYYAFLC). At 88–92 (HRPAR) the chain is on the extracellular side. The helical transmembrane segment at 93-113 (VAYLSAISALGALVVGALLSP) threads the bilayer. Topologically, residues 114–124 (PCSSPRFRRLR) are cytoplasmic. The helical transmembrane segment at 125–145 (AALFLAMGLSGVVPALHALWL) threads the bilayer. At 146–153 (NWGHAACY) the chain is on the extracellular side. The helical transmembrane segment at 154–174 (LALSLEVAMGLAYAAGAWFYV) threads the bilayer. Residues 175–194 (SRVPEKWRPGVFDVVGHSHQ) are Cytoplasmic-facing. A helical transmembrane segment spans residues 195 to 215 (IFHVLVLVGAVTHYVAVDVLL). Over 216-229 (NWRETVAAACSATS) the chain is Extracellular.

It belongs to the ADIPOR family.

Its subcellular location is the membrane. May play a role in abiotic stress response. The chain is Heptahelical transmembrane protein ADIPOR2 (ADIPOR2) from Oryza sativa subsp. japonica (Rice).